We begin with the raw amino-acid sequence, 217 residues long: Ribulose-phosphate 3-epimerase (217 aa).

Residue S7 participates in substrate binding. Residues H32, D34, and H65 each contribute to the a divalent metal cation site. The Proton acceptor role is filled by D34. Substrate-binding positions include H65, 141–144 (GFGG), 175–177 (DGG), and 197–198 (GS). Position 175 (D175) interacts with a divalent metal cation. D175 acts as the Proton donor in catalysis.

It belongs to the ribulose-phosphate 3-epimerase family. A divalent metal cation serves as cofactor.

The enzyme catalyses D-ribulose 5-phosphate = D-xylulose 5-phosphate. It functions in the pathway carbohydrate degradation. Its function is as follows. Catalyzes the reversible epimerization of D-ribulose 5-phosphate to D-xylulose 5-phosphate. This chain is Ribulose-phosphate 3-epimerase, found in Bacillus subtilis (strain 168).